A 745-amino-acid polypeptide reads, in one-letter code: 5-methyltetrahydropteroyltriglutamate--homocysteine methyltransferase (745 aa).

Residues Lys-19 and Asn-115 each coordinate 5-methyltetrahydropteroyltri-L-glutamate. Residues 420–422 (IGS) and Glu-473 each bind L-homocysteine. L-methionine is bound by residues 420-422 (IGS) and Glu-473. 5-methyltetrahydropteroyltri-L-glutamate contacts are provided by residues Asp-478, Tyr-501, 504-505 (RA), and Trp-550. Asp-588 is an L-homocysteine binding site. Asp-588 is a binding site for L-methionine. The Zn(2+) site is built by His-630, Cys-632, and Glu-654. His-683 acts as the Proton donor in catalysis. Cys-715 contacts Zn(2+).

It belongs to the vitamin-B12 independent methionine synthase family. The cofactor is Zn(2+).

The catalysed reaction is 5-methyltetrahydropteroyltri-L-glutamate + L-homocysteine = tetrahydropteroyltri-L-glutamate + L-methionine. It functions in the pathway amino-acid biosynthesis; L-methionine biosynthesis via de novo pathway; L-methionine from L-homocysteine (MetE route): step 1/1. In terms of biological role, catalyzes the transfer of a methyl group from 5-methyltetrahydrofolate to homocysteine resulting in methionine formation. The protein is 5-methyltetrahydropteroyltriglutamate--homocysteine methyltransferase of Streptococcus mutans serotype c (strain ATCC 700610 / UA159).